A 522-amino-acid chain; its full sequence is Hydroxymethylglutaryl-CoA synthase, cytoplasmic (522 aa).

Residues D43 and A44 each contribute to the (3S)-3-hydroxy-3-methylglutaryl-CoA site. The active-site Proton donor/acceptor is the E95. Residues C129, N167, T171, S221, H264, K273, N344, and S378 each contribute to the (3S)-3-hydroxy-3-methylglutaryl-CoA site. The Acyl-thioester intermediate role is filled by C129. The active-site Proton donor/acceptor is the H264.

This sequence belongs to the thiolase-like superfamily. HMG-CoA synthase family. Homodimer.

It is found in the cytoplasm. It carries out the reaction acetoacetyl-CoA + acetyl-CoA + H2O = (3S)-3-hydroxy-3-methylglutaryl-CoA + CoA + H(+). The protein operates within metabolic intermediate biosynthesis; (R)-mevalonate biosynthesis; (R)-mevalonate from acetyl-CoA: step 2/3. Its function is as follows. Catalyzes the condensation of acetyl-CoA with acetoacetyl-CoA to form HMG-CoA, which is converted by HMG-CoA reductase (HMGCR) into mevalonate, a precursor for cholesterol synthesis. The polypeptide is Hydroxymethylglutaryl-CoA synthase, cytoplasmic (HMGCS1) (Gallus gallus (Chicken)).